A 351-amino-acid polypeptide reads, in one-letter code: 5-deoxyribose 1-phosphate isomerase (351 aa).

Substrate contacts are provided by residues 48-50 (RGA), Arg91, and Gln198. Asp239 serves as the catalytic Proton donor. A substrate-binding site is contributed by 249-250 (NK).

This sequence belongs to the EIF-2B alpha/beta/delta subunits family. DrdI subfamily.

It catalyses the reaction 5-deoxy-alpha-D-ribose 1-phosphate = 5-deoxy-D-ribulose 1-phosphate. It functions in the pathway carbohydrate degradation. Catalyzes the isomerization of 5-deoxy-alpha-D-ribose 1-phosphate to 5-deoxy-D-ribulose 1-phosphate, as part of a 5-deoxyribose salvage pathway that recycles this toxic radical SAM enzyme by-product to mainstream metabolites. This Moorella thermoacetica (strain ATCC 39073 / JCM 9320) protein is 5-deoxyribose 1-phosphate isomerase.